The following is a 467-amino-acid chain: Hydroxyacid-oxoacid transhydrogenase, mitochondrial (467 aa).

Lys445 carries the N6-acetyllysine modification. Ser452 is subject to Phosphoserine.

It belongs to the iron-containing alcohol dehydrogenase family. Hydroxyacid-oxoacid transhydrogenase subfamily. Only expressed in adult liver.

It is found in the mitochondrion. It catalyses the reaction (S)-3-hydroxybutanoate + 2-oxoglutarate = (R)-2-hydroxyglutarate + acetoacetate. It carries out the reaction 4-hydroxybutanoate + 2-oxoglutarate = (R)-2-hydroxyglutarate + succinate semialdehyde. Its function is as follows. Catalyzes the cofactor-independent reversible oxidation of gamma-hydroxybutyrate (GHB) to succinic semialdehyde (SSA) coupled to reduction of 2-ketoglutarate (2-KG) to D-2-hydroxyglutarate (D-2-HG). D,L-3-hydroxyisobutyrate and L-3-hydroxybutyrate (L-3-OHB) are also substrates for HOT with 10-fold lower activities. This is Hydroxyacid-oxoacid transhydrogenase, mitochondrial (ADHFE1) from Homo sapiens (Human).